A 357-amino-acid chain; its full sequence is Histidinol-phosphate aminotransferase (357 aa).

Lysine 212 carries the post-translational modification N6-(pyridoxal phosphate)lysine.

This sequence belongs to the class-II pyridoxal-phosphate-dependent aminotransferase family. Histidinol-phosphate aminotransferase subfamily. In terms of assembly, homodimer. Pyridoxal 5'-phosphate serves as cofactor.

It catalyses the reaction L-histidinol phosphate + 2-oxoglutarate = 3-(imidazol-4-yl)-2-oxopropyl phosphate + L-glutamate. It participates in amino-acid biosynthesis; L-histidine biosynthesis; L-histidine from 5-phospho-alpha-D-ribose 1-diphosphate: step 7/9. The sequence is that of Histidinol-phosphate aminotransferase from Pectobacterium atrosepticum (strain SCRI 1043 / ATCC BAA-672) (Erwinia carotovora subsp. atroseptica).